Here is a 543-residue protein sequence, read N- to C-terminus: Sensor histidine kinase DcuS (543 aa).

At 1–20 (MRHSLPYRMLRKRPMKLSTT) the chain is on the cytoplasmic side. The helical transmembrane segment at 21–41 (VILMVSAVLFSVLLVVHLIYF) threads the bilayer. The Periplasmic segment spans residues 42-181 (SQISDMTRDG…VTQQINDSRW (140 aa)). Residues 107–110 (RYSH), lysine 121, 140–142 (GFL), and arginine 147 each bind (R)-malate. The chain crosses the membrane as a helical span at residues 182–202 (SIIWSVLFGMLVGLIGTCILV). The Cytoplasmic portion of the chain corresponds to 203–543 (KVLKKILFGL…IPWDGERSNR (341 aa)). Positions 212–323 (LEPYEISTLF…IIGAISTFRD (112 aa)) constitute a PAS domain. Positions 346–538 (ERSHEFMNKL…QFFVQIPWDG (193 aa)) constitute a Histidine kinase domain. Histidine 349 bears the Phosphohistidine; by autocatalysis mark.

In terms of assembly, homodimer. In terms of processing, autophosphorylated. The phosphoryl group is rapidly transferred to DcuR.

It is found in the cell inner membrane. It carries out the reaction ATP + protein L-histidine = ADP + protein N-phospho-L-histidine.. Functionally, member of the two-component regulatory system DcuR/DcuS. Involved in the C4-dicarboxylate-stimulated regulation of the genes encoding the anaerobic fumarate respiratory system (frdABCD; nuoAN; dcuB; sdhCDAB; etc.). Weakly regulates the aerobic C4-dicarboxylate transporter dctA. Activates DcuR by phosphorylation. This Escherichia coli O157:H7 protein is Sensor histidine kinase DcuS (dcuS).